The chain runs to 417 residues: Probable medium-chain specific acyl-CoA dehydrogenase 10, mitochondrial (417 aa).

A mitochondrion-targeting transit peptide spans 1 to 15 (MLSRIATSSLGLSRS). Residues 148-157 (YCVTEPGAGS) and 181-183 (WIT) each bind FAD. Residue serine 157 coordinates substrate. 268–271 (DMTR) provides a ligand contact to substrate. Residues 306 to 307 (HQ) and 364 to 368 (QIFGG) each bind FAD. The Proton acceptor role is filled by glutamate 391. Glycine 392 provides a ligand contact to substrate. 393–395 (TSQ) serves as a coordination point for FAD.

The protein belongs to the acyl-CoA dehydrogenase family. Homotetramer. It depends on FAD as a cofactor. Expressed in the epidermis and intestine.

Its subcellular location is the mitochondrion matrix. It carries out the reaction a medium-chain 2,3-saturated fatty acyl-CoA + oxidized [electron-transfer flavoprotein] + H(+) = a medium-chain (2E)-enoyl-CoA + reduced [electron-transfer flavoprotein]. Its pathway is lipid metabolism; mitochondrial fatty acid beta-oxidation. In terms of biological role, this enzyme is specific for acyl chain lengths of 4 to 16. The protein is Probable medium-chain specific acyl-CoA dehydrogenase 10, mitochondrial (acdh-10) of Caenorhabditis elegans.